Here is a 914-residue protein sequence, read N- to C-terminus: TRPM8 channel-associated factor 2 (914 aa).

The region spanning 541 to 840 (DAWMSTGLNL…TYLQLQEAFG (300 aa)) is the Peptidase M60 domain.

Belongs to the TCAF family. In terms of assembly, interacts with TRPM8 (via N-terminus and C-terminus domains); the interaction inhibits TRPM8 channel activity. Interacts with TRPV6.

The protein resides in the cell membrane. Negatively regulates the plasma membrane cation channel TRPM8 activity. Involved in the recruitment of TRPM8 to the cell surface. Promotes prostate cancer cell migration stimulation in a TRPM8-dependent manner. This Bos taurus (Bovine) protein is TRPM8 channel-associated factor 2.